Here is a 301-residue protein sequence, read N- to C-terminus: Probable 5-dehydro-4-deoxyglucarate dehydratase (301 aa).

The protein belongs to the DapA family.

The catalysed reaction is 5-dehydro-4-deoxy-D-glucarate + H(+) = 2,5-dioxopentanoate + CO2 + H2O. Its pathway is carbohydrate acid metabolism; D-glucarate degradation; 2,5-dioxopentanoate from D-glucarate: step 2/2. The sequence is that of Probable 5-dehydro-4-deoxyglucarate dehydratase from Cereibacter sphaeroides (strain ATCC 17023 / DSM 158 / JCM 6121 / CCUG 31486 / LMG 2827 / NBRC 12203 / NCIMB 8253 / ATH 2.4.1.) (Rhodobacter sphaeroides).